Here is a 108-residue protein sequence, read N- to C-terminus: Insulin-like peptide 17 (108 aa).

An N-terminal signal peptide occupies residues 1–19 (MFSTRGVLLLLSLMAAVAA).

The protein belongs to the insulin family. As to expression, expressed in head neurons and the uterus.

It is found in the secreted. In terms of biological role, involved in the regulation of the larval diapause. The sequence is that of Insulin-like peptide 17 from Caenorhabditis elegans.